The chain runs to 239 residues: Ribonuclease PH (239 aa).

Phosphate is bound by residues R86 and 124–126 (GTR).

It belongs to the RNase PH family. As to quaternary structure, homohexameric ring arranged as a trimer of dimers.

The catalysed reaction is tRNA(n+1) + phosphate = tRNA(n) + a ribonucleoside 5'-diphosphate. Its function is as follows. Phosphorolytic 3'-5' exoribonuclease that plays an important role in tRNA 3'-end maturation. Removes nucleotide residues following the 3'-CCA terminus of tRNAs; can also add nucleotides to the ends of RNA molecules by using nucleoside diphosphates as substrates, but this may not be physiologically important. Probably plays a role in initiation of 16S rRNA degradation (leading to ribosome degradation) during starvation. The chain is Ribonuclease PH from Psychromonas ingrahamii (strain DSM 17664 / CCUG 51855 / 37).